A 357-amino-acid chain; its full sequence is 3-isopropylmalate dehydrogenase (357 aa).

Residues Arg-97, Arg-107, Arg-135, and Asp-224 each contribute to the substrate site. Asp-224, Asp-248, and Asp-252 together coordinate Mg(2+). Position 282–294 (282–294 (GSAPDIAGKNIAN)) interacts with NAD(+).

Belongs to the isocitrate and isopropylmalate dehydrogenases family. LeuB type 1 subfamily. In terms of assembly, homodimer. Mg(2+) serves as cofactor. It depends on Mn(2+) as a cofactor.

The protein resides in the cytoplasm. It carries out the reaction (2R,3S)-3-isopropylmalate + NAD(+) = 4-methyl-2-oxopentanoate + CO2 + NADH. It participates in amino-acid biosynthesis; L-leucine biosynthesis; L-leucine from 3-methyl-2-oxobutanoate: step 3/4. Catalyzes the oxidation of 3-carboxy-2-hydroxy-4-methylpentanoate (3-isopropylmalate) to 3-carboxy-4-methyl-2-oxopentanoate. The product decarboxylates to 4-methyl-2 oxopentanoate. The polypeptide is 3-isopropylmalate dehydrogenase (Prochlorococcus marinus (strain MIT 9312)).